We begin with the raw amino-acid sequence, 269 residues long: Regulatory protein RecX (269 aa).

The protein belongs to the RecX family.

It is found in the cytoplasm. Its function is as follows. Modulates RecA activity. This Listeria welshimeri serovar 6b (strain ATCC 35897 / DSM 20650 / CCUG 15529 / CIP 8149 / NCTC 11857 / SLCC 5334 / V8) protein is Regulatory protein RecX.